The sequence spans 472 residues: Carboxypeptidase Q (472 aa).

The N-terminal stretch at 1–20 is a signal peptide; the sequence is MKFLLFMFVGVVHLLPLASG. Positions 21–44 are excised as a propeptide; the sequence is KAIYGNGPSQRTFQEIKEEIAHYG. Asn52, Asn61, and Asn179 each carry an N-linked (GlcNAc...) asparagine glycan. His290 and Asp302 together coordinate Zn(2+). The active-site Nucleophile is Glu336. Glu337 is a Zn(2+) binding site. Residues Asn353 and Asn356 are each glycosylated (N-linked (GlcNAc...) asparagine). Asp364 serves as a coordination point for Zn(2+). A glycan (N-linked (GlcNAc...) asparagine) is linked at Asn396. A Zn(2+)-binding site is contributed by His434.

Belongs to the peptidase M28 family. In terms of assembly, homodimer. The monomeric form is inactive while the homodimer is active. In terms of processing, N-glycosylated. The secreted form is modified by hybrid or complex type oligosaccharide chains.

It localises to the endoplasmic reticulum. The protein resides in the golgi apparatus. It is found in the lysosome. Its subcellular location is the secreted. Carboxypeptidase that may play an important role in the hydrolysis of circulating peptides. Catalyzes the hydrolysis of dipeptides with unsubstituted terminals into amino acids. May play a role in the liberation of thyroxine hormone from its thyroglobulin (Tg) precursor. This chain is Carboxypeptidase Q (CPQ), found in Bos taurus (Bovine).